A 570-amino-acid chain; its full sequence is A-type ATP synthase subunit A (570 aa).

Residue 223-230 (GPFGSGKT) coordinates ATP.

The protein belongs to the ATPase alpha/beta chains family. In terms of assembly, has multiple subunits with at least A(3), B(3), C, D, E, F, H, I and proteolipid K(x).

The protein resides in the cell membrane. It catalyses the reaction ATP + H2O + 4 H(+)(in) = ADP + phosphate + 5 H(+)(out). In terms of biological role, component of the A-type ATP synthase that produces ATP from ADP in the presence of a proton gradient across the membrane. The A chain is the catalytic subunit. This chain is A-type ATP synthase subunit A, found in Nanoarchaeum equitans (strain Kin4-M).